Consider the following 789-residue polypeptide: Transducer protein Htr6 (789 aa).

The next 2 helical transmembrane spans lie at 29 to 49 (FAVAFIVVLVVIAGAGVFAFQ) and 294 to 314 (TVTVLVVLAVISLAIVGIALG). HAMP domains are found at residues 315 to 367 (RHTV…DRIQ) and 409 to 462 (ERLQ…ATIA). In terms of domain architecture, Methyl-accepting transducer spans 481-717 (GAEEIETTSQ…SVVRRVDDVA (237 aa)). The segment at 763-789 (NQFETRADADEPDADTTVDASADDTGD) is disordered. Positions 772-789 (DEPDADTTVDASADDTGD) are enriched in acidic residues.

It belongs to the methyl-accepting chemotaxis (MCP) protein family. Post-translationally, methylated by CheR.

Its subcellular location is the cell membrane. Its function is as follows. Potentially involved in chemo- or phototactic signal transduction. This Halobacterium salinarum (strain ATCC 29341 / DSM 671 / R1) protein is Transducer protein Htr6 (htr6).